Here is a 175-residue protein sequence, read N- to C-terminus: Large ribosomal subunit protein uL6 (175 aa).

Belongs to the universal ribosomal protein uL6 family. In terms of assembly, part of the 50S ribosomal subunit.

This protein binds to the 23S rRNA, and is important in its secondary structure. It is located near the subunit interface in the base of the L7/L12 stalk, and near the tRNA binding site of the peptidyltransferase center. This Xanthomonas campestris pv. campestris (strain 8004) protein is Large ribosomal subunit protein uL6.